Consider the following 419-residue polypeptide: Tyrosine--tRNA ligase (419 aa).

L-tyrosine is bound at residue Y36. The short motif at 41–50 (PTGDSMHIGH) is the 'HIGH' region element. L-tyrosine contacts are provided by Y168 and Q172. A 'KMSKS' region motif is present at residues 230-234 (KFGKT). Residue K233 participates in ATP binding. Positions 352–419 (KNIVDFLVDA…KKKYFLARVK (68 aa)) constitute an S4 RNA-binding domain.

This sequence belongs to the class-I aminoacyl-tRNA synthetase family. TyrS type 1 subfamily. Homodimer.

The protein resides in the cytoplasm. The catalysed reaction is tRNA(Tyr) + L-tyrosine + ATP = L-tyrosyl-tRNA(Tyr) + AMP + diphosphate + H(+). Functionally, catalyzes the attachment of tyrosine to tRNA(Tyr) in a two-step reaction: tyrosine is first activated by ATP to form Tyr-AMP and then transferred to the acceptor end of tRNA(Tyr). This is Tyrosine--tRNA ligase from Latilactobacillus sakei subsp. sakei (strain 23K) (Lactobacillus sakei subsp. sakei).